The chain runs to 122 residues: MPTIQQLVRKGRHDKSAKVATAALKGSPQRRGVCTRVYTTTPKKPNSALRKVARVRLTSGIEVSAYIPGEGHNLQEHSMVLVRGGRVKDLPGVRYKIVRGALDTQGVKDRKQARSRYGAKRG.

3-methylthioaspartic acid is present on D89.

It belongs to the universal ribosomal protein uS12 family. As to quaternary structure, part of the 30S ribosomal subunit. Contacts proteins S8 and S17. May interact with IF1 in the 30S initiation complex.

Functionally, with S4 and S5 plays an important role in translational accuracy. Interacts with and stabilizes bases of the 16S rRNA that are involved in tRNA selection in the A site and with the mRNA backbone. Located at the interface of the 30S and 50S subunits, it traverses the body of the 30S subunit contacting proteins on the other side and probably holding the rRNA structure together. The combined cluster of proteins S8, S12 and S17 appears to hold together the shoulder and platform of the 30S subunit. The chain is Small ribosomal subunit protein uS12 from Corynebacterium glutamicum (strain R).